A 494-amino-acid polypeptide reads, in one-letter code: U3 small nucleolar RNA-associated protein 15 (494 aa).

7 WD repeats span residues 37–76 (KEYS…VKKT), 79–118 (RFKD…ILRA), 121–161 (AHQF…VQYD), 164–202 (GHED…PEVM), 205–243 (SHGE…QTPT), 248–287 (NHQK…VVHG), and 289–328 (KYSG…QTSS).

Component of the ribosomal small subunit (SSU) processome.

The protein resides in the nucleus. It localises to the nucleolus. Functionally, involved in nucleolar processing of pre-18S ribosomal RNA. Required for optimal pre-ribosomal RNA transcription by RNA polymerase I together with a subset of U3 proteins required for transcription (t-UTPs). This is U3 small nucleolar RNA-associated protein 15 (utp15) from Schizosaccharomyces pombe (strain 972 / ATCC 24843) (Fission yeast).